Reading from the N-terminus, the 504-residue chain is Maturase K (504 aa).

The protein belongs to the intron maturase 2 family. MatK subfamily.

The protein localises to the plastid. The protein resides in the chloroplast. Its function is as follows. Usually encoded in the trnK tRNA gene intron. Probably assists in splicing its own and other chloroplast group II introns. In Ochroma pyramidale (Balsa), this protein is Maturase K.